Here is a 528-residue protein sequence, read N- to C-terminus: MNDDPNALARIWIDVVADLTSDSPGGDLPPLTRGQKAWLALVKPLTLAQGFALLSVPSPFAQEAIERDLREPILHALGRHLGEQVEGLGVRIAAPVDDEPESDPPSRDHRPEPEPLHTPRHLEPSVTSSGSFRRRRFGSGEDQPYSDTTDFEEVDDDREALASVHESWPSYFTKPPSGPAPSATGGNSLNAKYTFDTFVIGSSNRFAHAAAVAIAEAPARAYNPLFVWGASGLGKTHLLHAAGHYAQRLFPGMRVKYVSTEEFTNDFINSLRDDRKVAFKRRYRETDVLLVDDIQFIEGKEGIQEEFFHTFNTLHNANKQIVVSSDRPPKQLATLEERLRTRFEWGLITDVQPPELETRIAILSKKARMDRLEVPDDVLELIASRIERNIRELEGALIRVTAFASLNRQPLDLTLAEVVLRDLMPDSSSLEINAATIMAVTAEYFNMSIDDLCGPGKARPLASARQISMYLCRELTDLSLPKIGQTFGRDHTTVMYADKKIRKEMTERRKVYDQVQELTARIKQRSKR.

Residues 1-104 are domain I, interacts with DnaA modulators; the sequence is MNDDPNALAR…PVDDEPESDP (104 aa). A disordered region spans residues 95 to 158; that stretch reads PVDDEPESDP…TDFEEVDDDR (64 aa). Residues 104-123 show a composition bias toward basic and acidic residues; that stretch reads PPSRDHRPEPEPLHTPRHLE. The segment at 105 to 187 is domain II; it reads PSRDHRPEPE…GPAPSATGGN (83 aa). The span at 149 to 158 shows a compositional bias: acidic residues; that stretch reads TDFEEVDDDR. The tract at residues 188–404 is domain III, AAA+ region; it reads SLNAKYTFDT…GALIRVTAFA (217 aa). Residues Gly-232, Gly-234, Lys-235, and Thr-236 each contribute to the ATP site. The segment at 405-528 is domain IV, binds dsDNA; that stretch reads SLNRQPLDLT…TARIKQRSKR (124 aa).

It belongs to the DnaA family. Oligomerizes as a right-handed, spiral filament on DNA at oriC.

The protein resides in the cytoplasm. Functionally, plays an essential role in the initiation and regulation of chromosomal replication. ATP-DnaA binds to the origin of replication (oriC) to initiate formation of the DNA replication initiation complex once per cell cycle. Binds the DnaA box (a 9 base pair repeat at the origin) and separates the double-stranded (ds)DNA. Forms a right-handed helical filament on oriC DNA; dsDNA binds to the exterior of the filament while single-stranded (ss)DNA is stabiized in the filament's interior. The ATP-DnaA-oriC complex binds and stabilizes one strand of the AT-rich DNA unwinding element (DUE), permitting loading of DNA polymerase. After initiation quickly degrades to an ADP-DnaA complex that is not apt for DNA replication. Binds acidic phospholipids. The protein is Chromosomal replication initiator protein DnaA of Rhodococcus jostii (strain RHA1).